Consider the following 124-residue polypeptide: Small ribosomal subunit protein uS12 (124 aa).

A 3-methylthioaspartic acid modification is found at D89. Residues Q105–S124 form a disordered region. Basic residues predominate over residues K108–G118.

The protein belongs to the universal ribosomal protein uS12 family. In terms of assembly, part of the 30S ribosomal subunit. Contacts proteins S8 and S17. May interact with IF1 in the 30S initiation complex.

Its function is as follows. With S4 and S5 plays an important role in translational accuracy. In terms of biological role, interacts with and stabilizes bases of the 16S rRNA that are involved in tRNA selection in the A site and with the mRNA backbone. Located at the interface of the 30S and 50S subunits, it traverses the body of the 30S subunit contacting proteins on the other side and probably holding the rRNA structure together. The combined cluster of proteins S8, S12 and S17 appears to hold together the shoulder and platform of the 30S subunit. The chain is Small ribosomal subunit protein uS12 from Mycobacterium avium (strain 104).